The chain runs to 86 residues: Beta-mammal/insect toxin To1 (86 aa).

The signal sequence occupies residues 1-20; it reads MTRFVLFISCFFLIDMIVEC. In terms of domain architecture, LCN-type CS-alpha/beta spans 22-84; that stretch reads KEGYLVGNDG…TWSSATNKCK (63 aa). 4 disulfides stabilise this stretch: C32-C83, C36-C58, C44-C64, and C48-C66. K84 bears the Lysine amide mark.

This sequence belongs to the long (4 C-C) scorpion toxin superfamily. Sodium channel inhibitor family. Beta subfamily. As to expression, expressed by the venom gland.

The protein localises to the secreted. Functionally, beta toxin that show multiple effects. It enhances the open probability at more negative potentials of human Nav1.3/SCN3A and Nav1.6/SCN8A, of the insect channel BgNaV1 and of arachnid VdNaV1 channel. It promotes an important shift in slow inactivation processes as a function of the prepulse voltage in human Nav1.3/SCN3A and Nav1.6/SCN8A and a small shift in Nav1.1/SCN1A, Nav1.2/SCN2A and Nav1.4/SCN4A. Finally, it reduces the peak of sodium currents in Nav1.3/SCN3A (80% inhibition at 70 nM of toxin), Nav1.6/SCN8A (55.3%), Nav1.1/SCN1A (53.3%), Nav1.5/SCN5A (46.7%), Nav1.2/SCN2A (42.7%) and Nav1.4/SCN4A (20%) voltage-gated sodium channels. It has also been shown to affect the sodium current permeability of rat cerebellum granular cells in a partially reversible manner. In vivo, an intraperitoneal injection (20 ug) into mice produces excitability, respiratory problems, convulsions and death, within the first 30 minutes after injection. The sequence is that of Beta-mammal/insect toxin To1 from Tityus obscurus (Amazonian scorpion).